The chain runs to 409 residues: Evolutionarily conserved signaling intermediate in Toll pathway, mitochondrial (409 aa).

Residues 1–26 (MLRRAQCLLRLHGNGGHSLVSRFRNY) constitute a mitochondrion transit peptide. 2 disordered regions span residues 27–53 (ATDEGNPKQNPNPNPRAQKPGTKNLPA) and 383–409 (EEIEGGASVPATSDNSSQDEHISSRQK). Over residues 400 to 409 (QDEHISSRQK) the composition is skewed to basic and acidic residues.

Belongs to the ECSIT family. Interacts with Traf6. Associates with mitochondrial complex I assembly intermediates during its biogenesis.

It localises to the cytoplasm. Its subcellular location is the nucleus. The protein localises to the mitochondrion. In terms of biological role, as part of the MCIA complex, involved in the assembly of the mitochondrial complex I. Involved in the innate immune response; promotes the production of antibacterial peptides. The polypeptide is Evolutionarily conserved signaling intermediate in Toll pathway, mitochondrial (Drosophila melanogaster (Fruit fly)).